We begin with the raw amino-acid sequence, 998 residues long: tRNA (34-2'-O)-methyltransferase regulator WDR6 (998 aa).

11 WD repeats span residues L148–P185, A200–T239, G250–R291, Q294–K333, N476–Q515, M527–R566, V567–L608, R664–R704, A779–L821, D826–Q865, and L868–K911.

It belongs to the WD repeat WDR6 family. Interacts with Trm7-34.

Its subcellular location is the cytoplasm. Its function is as follows. Together with methyltransferase Trm7-34, methylates the 2'-O-ribose of nucleotides at position 34 of the anticodon loop of substrate tRNAs. The sequence is that of tRNA (34-2'-O)-methyltransferase regulator WDR6 from Drosophila melanogaster (Fruit fly).